The sequence spans 549 residues: Chaperonin GroEL (549 aa).

ATP-binding positions include 29-32 (TLGP), K50, 86-90 (DGTTT), G414, 477-479 (NAA), and D493.

This sequence belongs to the chaperonin (HSP60) family. As to quaternary structure, forms a cylinder of 14 subunits composed of two heptameric rings stacked back-to-back. Interacts with the co-chaperonin GroES.

Its subcellular location is the cytoplasm. The enzyme catalyses ATP + H2O + a folded polypeptide = ADP + phosphate + an unfolded polypeptide.. In terms of biological role, together with its co-chaperonin GroES, plays an essential role in assisting protein folding. The GroEL-GroES system forms a nano-cage that allows encapsulation of the non-native substrate proteins and provides a physical environment optimized to promote and accelerate protein folding. In Geotalea uraniireducens (strain Rf4) (Geobacter uraniireducens), this protein is Chaperonin GroEL.